A 351-amino-acid chain; its full sequence is Adenine deaminase (351 aa).

Zn(2+) contacts are provided by His20, His22, and His200. Glu203 acts as the Proton donor in catalysis. A Zn(2+)-binding site is contributed by Asp281. Residue Asp282 participates in substrate binding.

The protein belongs to the metallo-dependent hydrolases superfamily. Adenosine and AMP deaminases family. Adenine deaminase type 2 subfamily. It depends on Zn(2+) as a cofactor.

It catalyses the reaction adenine + H2O + H(+) = hypoxanthine + NH4(+). Its function is as follows. Catalyzes the hydrolytic deamination of adenine to hypoxanthine. Plays an important role in the purine salvage pathway and in nitrogen catabolism. The polypeptide is Adenine deaminase (Cupriavidus pinatubonensis (strain JMP 134 / LMG 1197) (Cupriavidus necator (strain JMP 134))).